Here is a 208-residue protein sequence, read N- to C-terminus: Uracil phosphoribosyltransferase (208 aa).

5-phospho-alpha-D-ribose 1-diphosphate contacts are provided by residues Arg78, Arg103, and 130 to 138 (DPMLATGGS). Residues Ile193 and 198-200 (GDA) contribute to the uracil site. Asp199 lines the 5-phospho-alpha-D-ribose 1-diphosphate pocket.

The protein belongs to the UPRTase family. The cofactor is Mg(2+).

The catalysed reaction is UMP + diphosphate = 5-phospho-alpha-D-ribose 1-diphosphate + uracil. It participates in pyrimidine metabolism; UMP biosynthesis via salvage pathway; UMP from uracil: step 1/1. Its activity is regulated as follows. Allosterically activated by GTP. In terms of biological role, catalyzes the conversion of uracil and 5-phospho-alpha-D-ribose 1-diphosphate (PRPP) to UMP and diphosphate. The polypeptide is Uracil phosphoribosyltransferase (Escherichia fergusonii (strain ATCC 35469 / DSM 13698 / CCUG 18766 / IAM 14443 / JCM 21226 / LMG 7866 / NBRC 102419 / NCTC 12128 / CDC 0568-73)).